The primary structure comprises 472 residues: Uronate isomerase (472 aa).

It belongs to the metallo-dependent hydrolases superfamily. Uronate isomerase family.

It carries out the reaction D-glucuronate = D-fructuronate. It catalyses the reaction aldehydo-D-galacturonate = keto-D-tagaturonate. The protein operates within carbohydrate metabolism; pentose and glucuronate interconversion. The protein is Uronate isomerase of Halalkalibacterium halodurans (strain ATCC BAA-125 / DSM 18197 / FERM 7344 / JCM 9153 / C-125) (Bacillus halodurans).